A 350-amino-acid chain; its full sequence is Transcription factor MYB102 (350 aa).

HTH myb-type domains are found at residues 9–65 (KNGL…RPDI) and 66–116 (KRGR…RKKL). 2 DNA-binding regions (H-T-H motif) span residues 37-61 (WRTL…TNYL) and 89-112 (WSAI…NTHI).

Expressed in rosette leaves, cauline leaves and flowers.

It localises to the nucleus. Its function is as follows. Probable transcription factor that may function in osmotic stress and wounding signaling pathways. Contributes to basal resistance against the herbivore Pieris rapae (white cabbage butterfly) feeding. The sequence is that of Transcription factor MYB102 from Arabidopsis thaliana (Mouse-ear cress).